The sequence spans 291 residues: Transmembrane protein 41B (291 aa).

Residues 1–11 (MAKGRVAERSQ) show a composition bias toward basic and acidic residues. Residues 1–38 (MAKGRVAERSQTEMLHSTPAGDRAVGTQGSAAPGNKDH) are disordered. The residue at position 18 (Thr18) is a Phosphothreonine. Transmembrane regions (helical) follow at residues 52–72 (TSLL…FLVY), 109–129 (FYVQ…TFAI), 147–169 (LALF…LSYL), 197–217 (LINY…FINI), 225–245 (PLKV…FVAI), and 262–282 (SWNS…PAIF). The tract at residues 140–251 (GFLYPFPLAL…FVAIKAGTTL (112 aa)) is VTT domain; required for its function in autophagy.

The protein belongs to the TMEM41 family. As to quaternary structure, interacts with VMP1. Interacts with COPA, COPB1, VDAC1 and ERLIN2. Interacts with ATG2A. Interacts with SURF4.

Its subcellular location is the endoplasmic reticulum membrane. It is found in the endomembrane system. It catalyses the reaction a 1,2-diacyl-sn-glycero-3-phospho-L-serine(in) = a 1,2-diacyl-sn-glycero-3-phospho-L-serine(out). The enzyme catalyses cholesterol(in) = cholesterol(out). It carries out the reaction a 1,2-diacyl-sn-glycero-3-phosphocholine(in) = a 1,2-diacyl-sn-glycero-3-phosphocholine(out). The catalysed reaction is a 1,2-diacyl-sn-glycero-3-phosphoethanolamine(in) = a 1,2-diacyl-sn-glycero-3-phosphoethanolamine(out). Phospholipid scramblase involved in lipid homeostasis and membrane dynamics processes. Has phospholipid scramblase activity toward cholesterol and phosphatidylserine, as well as phosphatidylethanolamine and phosphatidylcholine. Required for autophagosome formation: participates in early stages of autophagosome biogenesis at the endoplasmic reticulum (ER) membrane by reequilibrating the leaflets of the ER as lipids are extracted by ATG2 (ATG2A or ATG2B) to mediate autophagosome assembly. In addition to autophagy, involved in other processes in which phospholipid scramblase activity is required. Required for normal motor neuron development. The polypeptide is Transmembrane protein 41B (Rattus norvegicus (Rat)).